A 46-amino-acid chain; its full sequence is U-limacoditoxin(6)-Dv61 (46 aa).

Residues 1–19 (MSKLLVLLMTTALATLAQA) form the signal peptide.

It belongs to the limacoditoxin-6 family. Expressed by the venom secretory cell of the spine. The spine is a cuticular structure containing a single large nucleated venom-secreting cell at its base. It is an independent unit capable of producing, storing and injecting venom. On the back of D.vulnerans caterpillars, spines are grouped together by 50 to 100 to form scoli, of which there are eight in D.vulnerans.

The protein localises to the secreted. Probable toxin. Does not show insecticidal, antimicrobial and antiparasitic activities. Does not induce increase in intracellular calcium in mouse DRG neurons, suggesting that it does not induce pain. The chain is U-limacoditoxin(6)-Dv61 from Doratifera vulnerans (Mottled cup moth).